The following is a 243-amino-acid chain: Type III pantothenate kinase (243 aa).

6–13 (DGGNTFIK) contributes to the ATP binding site. Substrate is bound by residues Tyr87 and 94–97 (GKDR). Asp96 (proton acceptor) is an active-site residue. Asp117 provides a ligand contact to K(+). Residue Thr120 coordinates ATP. Thr172 contributes to the substrate binding site.

Belongs to the type III pantothenate kinase family. Homodimer. It depends on NH4(+) as a cofactor. Requires K(+) as cofactor.

The protein resides in the cytoplasm. The enzyme catalyses (R)-pantothenate + ATP = (R)-4'-phosphopantothenate + ADP + H(+). It functions in the pathway cofactor biosynthesis; coenzyme A biosynthesis; CoA from (R)-pantothenate: step 1/5. In terms of biological role, catalyzes the phosphorylation of pantothenate (Pan), the first step in CoA biosynthesis. This Christiangramia forsetii (strain DSM 17595 / CGMCC 1.15422 / KT0803) (Gramella forsetii) protein is Type III pantothenate kinase.